The primary structure comprises 692 residues: MFYFRGCGRWVAASFTKLQFPLARLSSDSTAPRTPHFDVIVIGGGHAGTEAATAAARCGSRTLLLTHRVDTIGQMSCNPSFGGIGKGHLMREVDALDGLCSRICDQSGVHYKVLNRRKGPAVWGLRAQIDRKLYKQNMQKEILNTPLLTVQEGAVEDLILTEPEPEHTGKCRVSGVVLVDGSTVYAESVILTTGTFLRGIIVIGLETHPAGRLGDQPSIGLAQTLEKLGFVVGRLKTGTPPRIAKESINFSILNKHTPDNPSIPFSFTNETVWIKPEDQLPCYLTHTNPRVDEIVLKNLHLNSHVKETTRGPRYCPSIESKVLRFPNRLHQVWLEPEGMDSDLIYPQGLSMTLPAELQEKMITCIRGLEKAKVIQPGYGVQYDYLDPRQITPSLETHLVQRLFFAGQINGTTGYEEAAAQGVIAGINASLRVSRKPPFVVSRTEGYIGVLIDDLTTLGTSEPYRMFTSRVEFRLSLRPDNADSRLTLRGYKDAGCVSQQRYERACWMKSSLEEGISVLKSIEFSSSKWKKLIPEASISTSRSLPVRALDVLKYEEVDMDSLAKAVPEPLKKYTKCRELAERLKIEATYESVLFHQLQEIKGVQQDEALQLPKDLDYLTIRDVSLSHEVREKLHFSRPQTIGAASRIPGVTPAAIINLLRFVKTTQRRQAAMNESSKTDQYLCDADRLREREL.

A mitochondrion-targeting transit peptide spans 1-25; sequence MFYFRGCGRWVAASFTKLQFPLARL. FAD-binding positions include 43–48, V155, S218, and Q407; that span reads GGGHAG. K508 carries the post-translational modification N6-methyllysine.

This sequence belongs to the MnmG family. Homodimer; forms a dimer in the presence of potassium. Interacts with GTPBP3; forms the GTPBP3-MTO1 complex composed of homodimers of GTPBP3 and MTO1. Requires FAD as cofactor.

The protein resides in the mitochondrion. It carries out the reaction 5,10-methylenetetrahydrofolate + uridine(34) in tRNA + taurine + GTP + A + H2O = 5-taurinomethyluridine(34) in tRNA + 7,8-dihydrofolate + GDP + AH2 + phosphate + H(+). Component of the GTPBP3-MTO1 complex that catalyzes the 5-taurinomethyluridine (taum(5)U) modification at the 34th wobble position (U34) of mitochondrial tRNAs (mt-tRNAs), which plays a role in mt-tRNA decoding and mitochondrial translation. Taum(5)U formation on mammalian mt-tRNA requires the presence of both GTPBP3-mediated GTPase activity and MTO1 catalytic activity. The sequence is that of 5-taurinomethyluridine-[tRNA] synthase subunit MTO1, mitochondrial (MTO1) from Pongo abelii (Sumatran orangutan).